The chain runs to 224 residues: UPF0758 protein BLi02933/BL00636 (224 aa).

The 123-residue stretch at 102–224 folds into the MPN domain; that stretch reads VIRFPEDAAN…FVSLKEKGYL (123 aa). H173, H175, and D186 together coordinate Zn(2+). Residues 173–186 carry the JAMM motif motif; that stretch reads HNHPSGDPAPSRED.

It belongs to the UPF0758 family.

The chain is UPF0758 protein BLi02933/BL00636 from Bacillus licheniformis (strain ATCC 14580 / DSM 13 / JCM 2505 / CCUG 7422 / NBRC 12200 / NCIMB 9375 / NCTC 10341 / NRRL NRS-1264 / Gibson 46).